A 134-amino-acid chain; its full sequence is Large ribosomal subunit protein bL12 (134 aa).

The protein belongs to the bacterial ribosomal protein bL12 family. Homodimer. Part of the ribosomal stalk of the 50S ribosomal subunit. Forms a multimeric L10(L12)X complex, where L10 forms an elongated spine to which 2 to 4 L12 dimers bind in a sequential fashion. Binds GTP-bound translation factors.

Functionally, forms part of the ribosomal stalk which helps the ribosome interact with GTP-bound translation factors. Is thus essential for accurate translation. This Anaplasma phagocytophilum (strain HZ) protein is Large ribosomal subunit protein bL12.